A 121-amino-acid polypeptide reads, in one-letter code: Fluoride-specific ion channel FluC 1 (121 aa).

Transmembrane regions (helical) follow at residues 3 to 23 (YLYI…LSML), 29 to 49 (IPLG…SIGA), 67 to 87 (TGLL…VTLF), and 92 to 112 (FILF…SCYL). Na(+) is bound by residues Gly71 and Thr74.

Belongs to the fluoride channel Fluc/FEX (TC 1.A.43) family.

The protein localises to the cell membrane. It carries out the reaction fluoride(in) = fluoride(out). With respect to regulation, na(+) is not transported, but it plays an essential structural role and its presence is essential for fluoride channel function. Fluoride-specific ion channel. Important for reducing fluoride concentration in the cell, thus reducing its toxicity. The polypeptide is Fluoride-specific ion channel FluC 1 (Staphylococcus epidermidis (strain ATCC 35984 / DSM 28319 / BCRC 17069 / CCUG 31568 / BM 3577 / RP62A)).